Reading from the N-terminus, the 171-residue chain is Siroheme decarboxylase NirH subunit (171 aa).

It belongs to the Ahb/Nir family. Probably forms a complex composed of NirD, NirL, NirG and NirH. All proteins are required for the total conversion of siroheme to didecarboxysiroheme.

The catalysed reaction is siroheme + 2 H(+) = 12,18-didecarboxysiroheme + 2 CO2. It participates in porphyrin-containing compound metabolism. In terms of biological role, involved in heme d1 biosynthesis. Catalyzes the decarboxylation of siroheme into didecarboxysiroheme. This chain is Siroheme decarboxylase NirH subunit, found in Pseudomonas aeruginosa (strain ATCC 15692 / DSM 22644 / CIP 104116 / JCM 14847 / LMG 12228 / 1C / PRS 101 / PAO1).